Consider the following 140-residue polypeptide: Large ribosomal subunit protein uL16 (140 aa).

Basic residues predominate over residues 1 to 16 (MLMPKRVKHRKQMKGR). Residues 1–20 (MLMPKRVKHRKQMKGRMKGD) form a disordered region.

This sequence belongs to the universal ribosomal protein uL16 family. In terms of assembly, part of the 50S ribosomal subunit.

Its function is as follows. Binds 23S rRNA and is also seen to make contacts with the A and possibly P site tRNAs. The sequence is that of Large ribosomal subunit protein uL16 from Geobacter sulfurreducens (strain ATCC 51573 / DSM 12127 / PCA).